The sequence spans 279 residues: MKEIVHEKIQNLDLKEYLINFIDEKNHFSFGILSFKHYVALSGNRSSHILTLAGGIELLILAFDIFDDLEDEDNIEIKWMKIDPSLALNAATTLYTLGLETICSISNSAEFHRLTLKYALNAMQGQHEDLRNSPETEEECIQMMKQKAGSLTAMSAVLAAMLANGEFNQTIEDYAYKIGIIKQLENDYYGLVNDQRSDIRKKRKTLIYLFLNRKFNEASEKILKLINSHTSYHSFISDSSKFDELLFEAGLNQYVSMLIKLYEEEITASMNQLNINIKL.

Mg(2+)-binding residues include D67 and D71.

Belongs to the FPP/GGPP synthase family. Mg(2+) serves as cofactor.

It localises to the cell membrane. It carries out the reaction L-tryptophyl-[protein] + (2E)-geranyl diphosphate = (2S,3R)-3-geranyl-2,3-dihydro-2,N(alpha)-cyclo-L-tryptophyl-[protein] + diphosphate. Its function is as follows. Part of a major quorum-sensing system that regulates the development of genetic competence. Involved in the maturation of the competence pheromone ComX. Acts by catalyzing the transfer of a geranyl group on the ComX pheromone. Cannot use farnesyl diphosphate (FPP). The sequence is that of Tryptophan prenyltransferase ComQ from Bacillus spizizenii (Bacillus subtilis subsp. spizizenii).